Here is a 308-residue protein sequence, read N- to C-terminus: Mu-like prophage FluMu major head subunit (308 aa).

It to phage Mu protein T.

This is Mu-like prophage FluMu major head subunit from Haemophilus influenzae (strain ATCC 51907 / DSM 11121 / KW20 / Rd).